Here is a 650-residue protein sequence, read N- to C-terminus: Acetyl-coenzyme A synthetase (650 aa).

CoA contacts are provided by residues 191 to 194, threonine 311, and asparagine 335; that span reads RGGR. ATP-binding positions include 387-389, 411-416, aspartate 501, and arginine 516; these read GEP and DTWWQT. A CoA-binding site is contributed by serine 524. Arginine 527 serves as a coordination point for ATP. Positions 538, 540, and 543 each coordinate Mg(2+). Arginine 585 lines the CoA pocket. The residue at position 610 (lysine 610) is an N6-acetyllysine.

Belongs to the ATP-dependent AMP-binding enzyme family. Mg(2+) is required as a cofactor. Post-translationally, acetylated. Deacetylation by the SIR2-homolog deacetylase activates the enzyme.

It catalyses the reaction acetate + ATP + CoA = acetyl-CoA + AMP + diphosphate. In terms of biological role, catalyzes the conversion of acetate into acetyl-CoA (AcCoA), an essential intermediate at the junction of anabolic and catabolic pathways. AcsA undergoes a two-step reaction. In the first half reaction, AcsA combines acetate with ATP to form acetyl-adenylate (AcAMP) intermediate. In the second half reaction, it can then transfer the acetyl group from AcAMP to the sulfhydryl group of CoA, forming the product AcCoA. In Vibrio vulnificus (strain CMCP6), this protein is Acetyl-coenzyme A synthetase.